Reading from the N-terminus, the 416-residue chain is MALKVLPLHRTVLFAAILFLLHLACKVSCETGDCRQQEFKDRSGNCVLCKQCGPGMELSKECGFGYGEDAQCVPCRPHRFKEDWGFQKCKPCADCALVNRFQRANCSHTSDAVCGDCLPGFYRKTKLVGFQDMECVPCGDPPPPYEPHCTSKVNLVKISSTVSSPRDTALAAVICSALATVLLALLILCVIYCKRQFMEKKPSWSLRSQDIQYNGSELSCFDQPRLRHCAHRACCQYHRDSAPMYGPVHLIPSLCCEEARSSARAVLGCGLRSPTTLQERNPASVGDTMPAFFGSVSRSICAEFSDAWPLMQNPLGGDSSLCDSYPELTGEDTNSLNPENESAASLDSSGGQDLAGTAALESSGNVSESTDSPRHGDTGTVWEQTLAQDAQRTPSQGGWEDRENLNLAMPTAFQDA.

Residues 1 to 29 (MALKVLPLHRTVLFAAILFLLHLACKVSC) form the signal peptide. Topologically, residues 30-170 (ETGDCRQQEF…TVSSPRDTAL (141 aa)) are extracellular. 2 TNFR-Cys repeats span residues 33–72 (DCRQQEFKDRSGNCVLCKQCGPGMELSKECGFGYGEDAQC) and 74–114 (PCRP…DAVC). 8 cysteine pairs are disulfide-bonded: Cys-34–Cys-46, Cys-49–Cys-62, Cys-52–Cys-72, Cys-75–Cys-89, Cys-92–Cys-106, Cys-95–Cys-114, Cys-117–Cys-135, and Cys-138–Cys-149. N-linked (GlcNAc...) asparagine glycosylation occurs at Asn-105. A TNFR-Cys 3; truncated repeat occupies 116-149 (DCLPGFYRKTKLVGFQDMECVPCGDPPPPYEPHC). The chain crosses the membrane as a helical span at residues 171–191 (AAVICSALATVLLALLILCVI). The Cytoplasmic segment spans residues 192–416 (YCKRQFMEKK…LAMPTAFQDA (225 aa)). Residues 321–416 (LCDSYPELTG…LAMPTAFQDA (96 aa)) form a disordered region. 3 stretches are compositionally biased toward polar residues: residues 331 to 351 (EDTNSLNPENESAASLDSSGG), 360 to 370 (LESSGNVSEST), and 381 to 396 (VWEQTLAQDAQRTPSQ).

In terms of assembly, associates with TRAF1, TRAF2, TRAF3 and TRAF5. Interacts with LINGO1. As to expression, highly expressed in adult brain, and in embryos from day 11-17, but not earlier. Detected in embryonic brain and epithelium, and at lower levels in adult heart, lung and liver. In neonatal mice, mainly in hair follicles and neuron-like cells in the cerebellum, but not in the skin epidermis. Isoform 3 was found in embryonic day 17.5 skin but not in brain and liver.

Its subcellular location is the cell membrane. The protein resides in the secreted. In terms of biological role, can mediate activation of c-Jun and NF-kappa-B. May promote caspase-independent cell death. Isoform 2 and isoform 3 may act as decoy receptors. The polypeptide is Tumor necrosis factor receptor superfamily member 19 (Tnfrsf19) (Mus musculus (Mouse)).